Consider the following 73-residue polypeptide: Biotin/lipoyl attachment protein (73 aa).

The 68-residue stretch at 2-69 (TVSIQMAGNL…NEGDVLLELS (68 aa)) folds into the Biotinyl-binding domain. An N6-biotinyllysine; alternate modification is found at K35. K35 carries the N6-lipoyllysine; alternate modification.

Can be both biotinylated and lipoylated on Lys-35 upon overexpression in E.coli depending on the growth medium; the nature of the modification in situ in B.subtilis is unknown.

This chain is Biotin/lipoyl attachment protein (yngHB), found in Bacillus subtilis (strain 168).